Consider the following 562-residue polypeptide: Putative transport protein ETA_21820 (562 aa).

Transmembrane regions (helical) follow at residues 8–28 (LLIG…LCLG), 32–52 (LGSV…LLGQ), 66–86 (FMLF…SIFF), 94–114 (MLAI…GKLF), and 158–178 (HLSL…IFGA). RCK C-terminal domains are found at residues 202–288 (LDPD…SFRN) and 290–373 (KEVF…RIGF). Helical transmembrane passes span 383–403 (LLAF…TFQF), 406–426 (FNFG…LGFL), 440–460 (ALTM…GLSA), 473–493 (LLML…CFLF), 503–523 (ALLF…EIIS), and 540–560 (AIAN…WPIL).

It belongs to the AAE transporter (TC 2.A.81) family. YbjL subfamily.

It is found in the cell membrane. This chain is Putative transport protein ETA_21820, found in Erwinia tasmaniensis (strain DSM 17950 / CFBP 7177 / CIP 109463 / NCPPB 4357 / Et1/99).